Here is a 294-residue protein sequence, read N- to C-terminus: Nucleotide-binding protein Tfu_2020 (294 aa).

18 to 25 (GMSGAGRS) provides a ligand contact to ATP. 69 to 72 (DVRS) lines the GTP pocket.

Belongs to the RapZ-like family.

Displays ATPase and GTPase activities. This Thermobifida fusca (strain YX) protein is Nucleotide-binding protein Tfu_2020.